We begin with the raw amino-acid sequence, 266 residues long: Transcription factor atoh8 (266 aa).

The segment at 140–164 is disordered; the sequence is AASQAPAGGSERAESPRKRAGEPSG. Positions 150–160 are enriched in basic and acidic residues; that stretch reads ERAESPRKRAG. The interval 175–188 is basic motif; degenerate; sequence TRRLLANARERTRV. Residues 175 to 227 form the bHLH domain; the sequence is TRRLLANARERTRVHTISAAFEALRKQVPCYSYGQKLSKLAILRIACNYILSL. The tract at residues 189–227 is helix-loop-helix motif; it reads HTISAAFEALRKQVPCYSYGQKLSKLAILRIACNYILSL.

It localises to the nucleus. Its subcellular location is the nucleus speckle. The protein localises to the cytoplasm. Functionally, transcription factor that binds a palindromic (canonical) core consensus DNA sequence 5'-CANNTG- 3' known as an E-box element, possibly as a heterodimer with other bHLH proteins. During development, is required for heart looping and swim bladder formation by acting in concert with GATA4 and ZFPM1. During the development of both the retina and skeletal muscles is required for neural retinal cell through modulating PAX6 and NEUROG3 expression and myogenic differentiation. The protein is Transcription factor atoh8 of Danio rerio (Zebrafish).